Reading from the N-terminus, the 432-residue chain is Enolase (432 aa).

Q166 is a binding site for (2R)-2-phosphoglycerate. The active-site Proton donor is the E208. Residues D245, E291, and D318 each coordinate Mg(2+). Residues K343, R372, S373, and K394 each coordinate (2R)-2-phosphoglycerate. The Proton acceptor role is filled by K343.

It belongs to the enolase family. Mg(2+) is required as a cofactor.

The protein localises to the cytoplasm. Its subcellular location is the secreted. The protein resides in the cell surface. The enzyme catalyses (2R)-2-phosphoglycerate = phosphoenolpyruvate + H2O. The protein operates within carbohydrate degradation; glycolysis; pyruvate from D-glyceraldehyde 3-phosphate: step 4/5. Catalyzes the reversible conversion of 2-phosphoglycerate (2-PG) into phosphoenolpyruvate (PEP). It is essential for the degradation of carbohydrates via glycolysis. The sequence is that of Enolase from Leptospira interrogans serogroup Icterohaemorrhagiae serovar copenhageni (strain Fiocruz L1-130).